Reading from the N-terminus, the 1942-residue chain is Myosin-1 (1942 aa).

The region spanning 33-82 (DAKSSVFVVDAKESFVKATVQSREGGKVTAKTEGGTTVTVKDDQVYPMNP) is the Myosin N-terminal SH3-like domain. S36 bears the Phosphoserine mark. Residues T64 and T69 each carry the phosphothreonine modification. A Myosin motor domain is found at 86–785 (DKIEDMAMMT…LLGLLEEMRD (700 aa)). The residue at position 130 (K130) is an N6,N6,N6-trimethyllysine. Position 179–186 (179–186 (GESGAGKT)) interacts with ATP. Phosphotyrosine is present on Y389. T419 carries the phosphothreonine modification. Y424 carries the phosphotyrosine modification. The residue at position 625 (S625) is a Phosphoserine. Positions 662 to 684 (LNKLMTNLRSTHPHFVRCIIPNE) are actin-binding. H760 carries the post-translational modification Pros-methylhistidine. Positions 764 to 778 (KFGHTKVFFKAGLLG) are actin-binding. The IQ domain maps to 788 to 817 (LAQLITRTQAMCRGYLARVEYQKMVERRES). Residues 846-1942 (LLKSAETEKE…EVHTKIISEE (1097 aa)) are a coiled coil. Residues S1095, S1099, S1165, S1240, and S1246 each carry the phosphoserine modification. The tract at residues 1156-1175 (RLEEAGGATSAQIEMNKKRE) is disordered. Phosphothreonine is present on T1258. S1264 carries the post-translational modification Phosphoserine. Phosphothreonine occurs at positions 1268 and 1289. Phosphoserine occurs at positions 1291, 1295, 1306, and 1309. Y1467 bears the Phosphotyrosine mark. T1470 is modified (phosphothreonine). S1477 is modified (phosphoserine). Position 1495 is a phosphotyrosine (Y1495). S1498 carries the phosphoserine modification. At T1504 the chain carries Phosphothreonine. Residue S1517 is modified to Phosphoserine. Residue T1520 is modified to Phosphothreonine. A phosphoserine mark is found at S1545, S1557, S1577, S1603, S1606, S1717, and S1729. Residues T1733 and T1739 each carry the phosphothreonine modification. S1742 carries the post-translational modification Phosphoserine.

It belongs to the TRAFAC class myosin-kinesin ATPase superfamily. Myosin family. In terms of assembly, muscle myosin is a hexameric protein that consists of 2 heavy chain subunits (MHC), 2 alkali light chain subunits (MLC) and 2 regulatory light chain subunits (MLC-2). Interacts with SLC26A5. Expressed in the cochlea (at protein level). Strongly expressed in spiral ganglion neurons with axonal sprouts and supporting cells around hair cells. In the organ of Corti, it is expressed in inner and outer hair cells, and in supporting cells.

The protein resides in the cytoplasm. The protein localises to the myofibril. Functionally, required for normal hearing. It plays a role in cochlear amplification of auditory stimuli, likely through the positive regulation of prestin (SLC26A5) activity and outer hair cell (OHC) electromotility. This Mus musculus (Mouse) protein is Myosin-1.